Here is a 164-residue protein sequence, read N- to C-terminus: Probable metalloprotease y4qB (164 aa).

An MPN domain is found at 5–142 (IWIPESVVEA…WLPHAWIGQL (138 aa)). Zn(2+) is bound by residues His-89, His-91, and Asp-103.

The protein belongs to the peptidase M67B family.

The polypeptide is Probable metalloprotease y4qB (Sinorhizobium fredii (strain NBRC 101917 / NGR234)).